The following is a 166-amino-acid chain: Phospholipase A2 inhibitor clone 06/08 (166 aa).

Residues 1 to 19 (MRLILLSGLLLLGIFLANG) form the signal peptide. In terms of domain architecture, C-type lectin spans 46-161 (LRGAFLTVYK…CDDNLLVVCE (116 aa)). N-linked (GlcNAc...) asparagine glycosylation is found at asparagine 61 and asparagine 122. Disulfide bonds link cysteine 83-cysteine 160 and cysteine 138-cysteine 152.

This sequence belongs to the alpha-type phospholipase A2 inhibitor family. In terms of assembly, homotrimer; non-covalently linked. In terms of tissue distribution, expressed by the liver.

The protein localises to the secreted. Its function is as follows. This phospholipase A2 inhibitor binds directly phospholipase A2 in the presence or absence of calcium. The polypeptide is Phospholipase A2 inhibitor clone 06/08 (Bothrops neuwiedi (Neuwied's lancehead)).